The sequence spans 185 residues: Probable nicotinate-nucleotide adenylyltransferase (185 aa).

Belongs to the NadD family.

The catalysed reaction is nicotinate beta-D-ribonucleotide + ATP + H(+) = deamido-NAD(+) + diphosphate. Its pathway is cofactor biosynthesis; NAD(+) biosynthesis; deamido-NAD(+) from nicotinate D-ribonucleotide: step 1/1. Functionally, catalyzes the reversible adenylation of nicotinate mononucleotide (NaMN) to nicotinic acid adenine dinucleotide (NaAD). The chain is Probable nicotinate-nucleotide adenylyltransferase from Methylorubrum extorquens (strain PA1) (Methylobacterium extorquens).